The primary structure comprises 230 residues: uncharacterized protein (230 aa).

The HTH gntR-type domain occupies 12 to 80 (KNLSYVLAEK…PRIGTRVMPQ (69 aa)). A DNA-binding region (H-T-H motif) is located at residues 40-59 (EIELGEQFGVSRTAVREAVK).

This is an uncharacterized protein from Escherichia coli (strain K12).